The following is a 308-amino-acid chain: N-acetylmuramic acid 6-phosphate etherase (308 aa).

Residues 62 to 225 form the SIS domain; the sequence is ITDAFKVGGR…TTASMIRLGK (164 aa). The active-site Proton donor is Glu90. Glu121 is a catalytic residue.

This sequence belongs to the GCKR-like family. MurNAc-6-P etherase subfamily. In terms of assembly, homodimer.

The catalysed reaction is N-acetyl-D-muramate 6-phosphate + H2O = N-acetyl-D-glucosamine 6-phosphate + (R)-lactate. Its pathway is amino-sugar metabolism; 1,6-anhydro-N-acetylmuramate degradation. It functions in the pathway amino-sugar metabolism; N-acetylmuramate degradation. It participates in cell wall biogenesis; peptidoglycan recycling. In terms of biological role, specifically catalyzes the cleavage of the D-lactyl ether substituent of MurNAc 6-phosphate, producing GlcNAc 6-phosphate and D-lactate. Together with AnmK, is also required for the utilization of anhydro-N-acetylmuramic acid (anhMurNAc) either imported from the medium or derived from its own cell wall murein, and thus plays a role in cell wall recycling. This is N-acetylmuramic acid 6-phosphate etherase from Vibrio campbellii (strain ATCC BAA-1116).